The primary structure comprises 379 residues: MTAPHRSTIHILGLGAMGTVLAVDLLRFTNALVVPLFRSQERLAQFQKTNGNNISIRKLYLEGSPIFSYPVEKCECPETFSKKPIDNLVVTTKTYQTKEALAPYLPYINKNTNLILIQNGLGVLELLREEIFTDSKNRPHLFQGVISHGVYQDKAGVFNHAGWAGMKIAKLPWTEEEMIQKKSVVEDDAANNSLVKLLTEPKFAKEFGIEHSTYQEMLFGQLFKFLVNACMNPVTAILDCVNGEMKASCGPVFTSIIDECLQILRVAYRPLFQYHEKYSGNEEYPEMDVNAVLTTDNMVSEVTRIGCDINSRNSSSMRQDTLFLRDIEIEYINGYVVKLADNLNLDPNCCKVNKTIGELATMRLALNRSRSINGDWRKD.

NADP(+)-binding positions include 13 to 18 (GLGAMG) and N119. N119 serves as a coordination point for substrate. Catalysis depends on K224, which acts as the Proton donor. Residues N228, N232, and S316 each contribute to the substrate site. Residue E328 participates in NADP(+) binding.

The protein belongs to the ketopantoate reductase family.

It catalyses the reaction (R)-pantoate + NADP(+) = 2-dehydropantoate + NADPH + H(+). It functions in the pathway cofactor biosynthesis; (R)-pantothenate biosynthesis; (R)-pantoate from 3-methyl-2-oxobutanoate: step 2/2. Its function is as follows. Catalyzes the NADPH-dependent reduction of ketopantoate into pantoic acid. The sequence is that of 2-dehydropantoate 2-reductase (PAN5) from Saccharomyces cerevisiae (strain ATCC 204508 / S288c) (Baker's yeast).